A 482-amino-acid chain; its full sequence is Alanine aminotransferase 2 (482 aa).

Lysine 299 is subject to N6-(pyridoxal phosphate)lysine.

This sequence belongs to the class-I pyridoxal-phosphate-dependent aminotransferase family. Alanine aminotransferase subfamily. In terms of assembly, homodimer. The cofactor is pyridoxal 5'-phosphate. Post-translationally, the N-terminus is blocked. In terms of tissue distribution, mesophyll and bundle sheath cells.

It catalyses the reaction L-alanine + 2-oxoglutarate = pyruvate + L-glutamate. The protein operates within photosynthesis; C4 acid pathway. It participates in amino-acid degradation; L-alanine degradation via transaminase pathway; pyruvate from L-alanine: step 1/1. Transfer of C3 units between the cytosol of mesophyll and bundle sheath cells to maintain a nitrogen-carbon balance in the C4-dicarboxylic pathway. This Panicum miliaceum (Proso millet) protein is Alanine aminotransferase 2.